Consider the following 117-residue polypeptide: Transcription elongation factor A protein-like 8 (117 aa).

Residues 1–82 (MQKSCDENEG…EEVIRGVDEL (82 aa)) are disordered. The span at 41 to 82 (NVREETEGSHRGEPAEPSPEPKEDTPARHLNPEEVIRGVDEL) shows a compositional bias: basic and acidic residues. A coiled-coil region spans residues 73 to 100 (EEVIRGVDELERLREEIRRVRNKFVLMH).

This sequence belongs to the TFS-II family. TFA subfamily.

The protein localises to the nucleus. Functionally, may be involved in transcriptional regulation. In Mus musculus (Mouse), this protein is Transcription elongation factor A protein-like 8 (Tceal8).